Reading from the N-terminus, the 63-residue chain is Arabinogalactan peptide 3 (63 aa).

A signal peptide spans 1–26 (MASRILYAAAVVAAVAVSSLAGVAYA). Ser36 carries the GPI-anchor amidated serine lipid modification. Positions 37-63 (GAAAVSSSLVAAVLCPAVALLLGNLRQ) are cleaved as a propeptide — removed in mature form.

Belongs to the AG-peptide AGP family. Post-translationally, O-glycosylated on hydroxyprolines; noncontiguous hydroxylproline residues are glycosylated with arabinogalactan. Expressed in roots, stems, leaves, flowers and seeds.

The protein localises to the vacuole. Its subcellular location is the aleurone grain membrane. Functionally, proteoglycan that seems to be implicated in diverse developmental roles such as differentiation, cell-cell recognition, embryogenesis and programmed cell death. In Oryza sativa subsp. japonica (Rice), this protein is Arabinogalactan peptide 3 (AGPEP3).